Consider the following 830-residue polypeptide: MAPNAATKKRAAARDDDFVLTLSDDENDIFENGVEEDGDNAQEDTLSSSKKRKREAAEAPKGKNKKQKQLKKSKKGESAAGAVSDDQSSEEDEAEAMDAGEDDGALDSEFEFDVGGNANTGVIEGFDGWEARNGASLADAPKNGDKKAVDIDDIISRRKAKKEAELKKKQQKEKKRREEEGEEESEGEDADSDGGMSVDFQDDELLAADGFGMGADGADESDDDVENGSNDSDDSEGKGSEDEESGDEYNDDDAASDNDSVATPVHHPDDEAASDEESEAESEVDAEEAEKRKAFFAPEEKSTAVSTFNRSFQDFNLSRPILRGLASVNFTTPTPIQQKTIPVALLGKDIVGSAVTGSGKTAAFVVPILERLLFRPRKVPTSRVAILMPTRELAVQCYNVATKLATHTDITFCQLVGGFSLREQENILKKRPDVIIATPGRFIDHMRNSPSFTVDTLEILVLDEADRMLEDGFADELNEILTTIPKSRQTMLFSATMTDSVDKLIRVGLNRPVRLMVDSKKNTSMNLTQEFVRLRPGREDKRLGYLLYLCNEIYTGRVIVFFRQKREAHRVRIVFGLLGLKAAELHGSMSQEQRIKSVENFREGKVAFLLATDLASRGLDIKGVETVINYEAPQSHEIYLHRVGRTARAGRSGRACTIAAEPDRKIVKSAVKAGKAQGAKIVSRVVDPAVADEWAAKAKGLEDEIEEVLQEEKLEKQMAQAEMQVTKGENLIKHEAEIMSRPKRTWFETERDKRAARKLGATELNGPSKKDKVKLSNKDKKRLDDARQRHEGNIGWKKGKADREAPKQGKNKGGKTKSDKKNKIKMKGKK.

2 disordered regions span residues 1-117 (MAPN…VGGN) and 159-295 (KAKK…RKAF). Residues 23–42 (SDDENDIFENGVEEDGDNAQ) show a composition bias toward acidic residues. Over residues 62 to 74 (GKNKKQKQLKKSK) the composition is skewed to basic residues. Residues 87–112 (QSSEEDEAEAMDAGEDDGALDSEFEF) show a composition bias toward acidic residues. Positions 159 to 168 (KAKKEAELKK) are enriched in basic and acidic residues. Acidic residues-rich tracts occupy residues 180-192 (EGEEESEGEDADS), 217-234 (GADESDDDVENGSNDSDD), 241-256 (EDEESGDEYNDDDAAS), and 271-288 (EAASDEESEAESEVDAEE). The Q motif motif lies at 310 to 338 (RSFQDFNLSRPILRGLASVNFTTPTPIQQ). One can recognise a Helicase ATP-binding domain in the interval 341–515 (IPVALLGKDI…RVGLNRPVRL (175 aa)). 354–361 (AVTGSGKT) serves as a coordination point for ATP. The DEAD box motif lies at 463-466 (DEAD). The 148-residue stretch at 542 to 689 (RLGYLLYLCN…KIVSRVVDPA (148 aa)) folds into the Helicase C-terminal domain. The stretch at 689 to 735 (AVADEWAAKAKGLEDEIEEVLQEEKLEKQMAQAEMQVTKGENLIKHE) forms a coiled coil. Residues 757-830 (RKLGATELNG…KNKIKMKGKK (74 aa)) form a disordered region. The span at 768-792 (SKKDKVKLSNKDKKRLDDARQRHEG) shows a compositional bias: basic and acidic residues.

The protein belongs to the DEAD box helicase family. DDX27/DRS1 subfamily. Associates with pre-ribosomal particles.

It localises to the nucleus. The protein localises to the nucleolus. The catalysed reaction is ATP + H2O = ADP + phosphate + H(+). In terms of biological role, ATP-binding RNA helicase involved in ribosome assembly. This Aspergillus fumigatus (strain ATCC MYA-4609 / CBS 101355 / FGSC A1100 / Af293) (Neosartorya fumigata) protein is ATP-dependent RNA helicase drs1 (drs1).